The chain runs to 310 residues: ADP-L-glycero-D-manno-heptose-6-epimerase (310 aa).

NADP(+) contacts are provided by residues 10-11 (FI), 31-32 (DN), Lys38, Lys53, 75-79 (EGACS), and Asn92. Tyr140 (proton acceptor) is an active-site residue. Position 144 (Lys144) interacts with NADP(+). Asn169 lines the substrate pocket. Val170 and Lys178 together coordinate NADP(+). Lys178 acts as the Proton acceptor in catalysis. Substrate contacts are provided by residues Ser180, His187, 201–204 (FEGS), Arg209, and Tyr272.

This sequence belongs to the NAD(P)-dependent epimerase/dehydratase family. HldD subfamily. In terms of assembly, homopentamer. Requires NADP(+) as cofactor.

It catalyses the reaction ADP-D-glycero-beta-D-manno-heptose = ADP-L-glycero-beta-D-manno-heptose. It participates in nucleotide-sugar biosynthesis; ADP-L-glycero-beta-D-manno-heptose biosynthesis; ADP-L-glycero-beta-D-manno-heptose from D-glycero-beta-D-manno-heptose 7-phosphate: step 4/4. Its pathway is bacterial outer membrane biogenesis; LPS core biosynthesis. Its function is as follows. Catalyzes the interconversion between ADP-D-glycero-beta-D-manno-heptose and ADP-L-glycero-beta-D-manno-heptose via an epimerization at carbon 6 of the heptose. This is ADP-L-glycero-D-manno-heptose-6-epimerase from Klebsiella pneumoniae.